We begin with the raw amino-acid sequence, 162 residues long: Photosystem II extrinsic protein V (162 aa).

A signal peptide spans 1–26 (MFNKNFWTSIIIGCLFCTITYSGVNA). Heme c-binding residues include Cys62, Cys65, His66, and His117.

The protein belongs to the cytochrome c family. PsbV subfamily. PSII is composed of 1 copy each of membrane proteins PsbA, PsbB, PsbC, PsbD, PsbE, PsbF, PsbH, PsbI, PsbJ, PsbK, PsbL, PsbM, PsbT, PsbX, PsbY, PsbZ, Psb30/Ycf12, at least 3 peripheral proteins of the oxygen-evolving complex and a large number of cofactors. It forms dimeric complexes. Requires heme c as cofactor.

It localises to the plastid. It is found in the cyanelle thylakoid membrane. Functionally, one of the extrinsic, lumenal subunits of photosystem II (PSII). PSII is a light-driven water plastoquinone oxidoreductase, using light energy to abstract electrons from H(2)O, generating a proton gradient subsequently used for ATP formation. The extrinsic proteins stabilize the structure of photosystem II oxygen-evolving complex (OEC), the ion environment of oxygen evolution and protect the OEC against heat-induced inactivation. This chain is Photosystem II extrinsic protein V, found in Cyanophora paradoxa.